The following is a 130-amino-acid chain: Methylglyoxal synthase (130 aa).

The MGS-like domain maps to 1–130; that stretch reads MSKPRIALIA…DLARNMQDVC (130 aa). Substrate is bound by residues H11, K15, 37–40, and 57–58; these read TGTT and SG. Residue D63 is the Proton donor/acceptor of the active site. H90 contributes to the substrate binding site.

It belongs to the methylglyoxal synthase family.

It carries out the reaction dihydroxyacetone phosphate = methylglyoxal + phosphate. In terms of biological role, catalyzes the formation of methylglyoxal from dihydroxyacetone phosphate. The sequence is that of Methylglyoxal synthase from Burkholderia vietnamiensis (strain G4 / LMG 22486) (Burkholderia cepacia (strain R1808)).